The primary structure comprises 60 residues: Kunitz-type serine protease inhibitor homolog calcicludine (60 aa).

Positions 7–57 (CKEPVRIGSCKKQFSSFYFKWTAKKCLPFLFSGCGGNANRFQTIGECRKKC) constitute a BPTI/Kunitz inhibitor domain. 3 cysteine pairs are disulfide-bonded: cysteine 7–cysteine 57, cysteine 16–cysteine 40, and cysteine 32–cysteine 53.

This sequence belongs to the venom Kunitz-type family. Expressed by the venom gland.

Its subcellular location is the secreted. Potent blocker of high-voltage-activated calcium ion channels in the nanomolar range, particularly the L-type channels in cerebellar granule cells. The sensitivity of L-, N- and P-type channels to CAC is tissue and species-dependent. Blocks the L-type current of cardiac cells, depressing cardiac contractility. The protein is Kunitz-type serine protease inhibitor homolog calcicludine of Dendroaspis angusticeps (Eastern green mamba).